The primary structure comprises 1351 residues: DNA-directed RNA polymerase subunit beta' (1351 aa).

Positions 70, 72, 85, and 88 each coordinate Zn(2+). Positions 460, 462, and 464 each coordinate Mg(2+). Residues cysteine 801, cysteine 875, cysteine 882, and cysteine 885 each contribute to the Zn(2+) site.

Belongs to the RNA polymerase beta' chain family. The RNAP catalytic core consists of 2 alpha, 1 beta, 1 beta' and 1 omega subunit. When a sigma factor is associated with the core the holoenzyme is formed, which can initiate transcription. Mg(2+) serves as cofactor. Zn(2+) is required as a cofactor.

The enzyme catalyses RNA(n) + a ribonucleoside 5'-triphosphate = RNA(n+1) + diphosphate. Functionally, DNA-dependent RNA polymerase catalyzes the transcription of DNA into RNA using the four ribonucleoside triphosphates as substrates. In Syntrophobacter fumaroxidans (strain DSM 10017 / MPOB), this protein is DNA-directed RNA polymerase subunit beta'.